Consider the following 105-residue polypeptide: Serine protease inhibitor Kazal-type 6 (105 aa).

The signal sequence occupies residues 1-23 (MKVAGVFLLLSLALLCFFSGEFS). Gln24 is subject to Pyrrolidone carboxylic acid. The Kazal-like domain maps to 49 to 105 (RLFQINCGEFRDPKVFCTRESDPLCGSDGQTYGNKCAFCKALEKSSGKINLKHRGKC). 3 disulfides stabilise this stretch: Cys55–Cys87, Cys65–Cys84, and Cys73–Cys105.

Its subcellular location is the secreted. Functionally, serine protease inhibitor selective for kallikreins. Efficiently inhibits KLK4, KLK5, KLK6, KLK7, KLK12, KLK13 and KLK14. Doesn't inhibit KLK8. This chain is Serine protease inhibitor Kazal-type 6 (Spink6), found in Rattus norvegicus (Rat).